Here is a 275-residue protein sequence, read N- to C-terminus: MALKTFRPITPSLRQLVLVDRSELWKGKPVKALTEGLTGSGGRNNTGRITARRMGGGHKRRYRLVDFKRRMKPDMPATVERLEYDPNRTAFIALIRYTDGTLAYILAPQRLKAGDTVVSGEKVDVKPGNAMPLRNIPVGTIVHNVELKPGKGGQLARAAGTYLQLVGRDQGYAQLKLPSGELRVVRGECFATIGAVSNPDQANVVIGKAGRNRWLGRRPSVRGVVMNPIDHPHGGGEGRTSGGRHPVTPWGKPTKGKKTRQNKATDKFIIRRRAK.

Disordered stretches follow at residues 36–55 and 224–263; these read GLTGSGGRNNTGRITARRMG and VVMNPIDHPHGGGEGRTSGGRHPVTPWGKPTKGKKTRQNK.

The protein belongs to the universal ribosomal protein uL2 family. Part of the 50S ribosomal subunit. Forms a bridge to the 30S subunit in the 70S ribosome.

One of the primary rRNA binding proteins. Required for association of the 30S and 50S subunits to form the 70S ribosome, for tRNA binding and peptide bond formation. It has been suggested to have peptidyltransferase activity; this is somewhat controversial. Makes several contacts with the 16S rRNA in the 70S ribosome. The protein is Large ribosomal subunit protein uL2 of Rhodospirillum centenum (strain ATCC 51521 / SW).